The sequence spans 473 residues: Calcium uptake protein 1, mitochondrial (473 aa).

The transit peptide at 1-33 directs the protein to the mitochondrion; sequence MFRLRFIPAVAGLAAVSRRYHGVANHARSRRRL. Positions 61–101 are disordered; the sequence is SSVKHSMREETSEKEKEDADQAVESSDEDQPQEGKKKKARV. The segment covering 66–79 has biased composition (basic and acidic residues); the sequence is SMREETSEKEKEDA. Over residues 80–91 the composition is skewed to acidic residues; that stretch reads DQAVESSDEDQP. A polybasic region region spans residues 96-107; sequence KKKARVGFRDRK. The k/R-ring stretch occupies residues 123–126; sequence KIFR. One can recognise an EF-hand 1 domain in the interval 215-250; it reads TPQRNFEIAFKMFDLNGDGEVDMEEFEQVQSIIRSQ. Residues Asp228, Asn230, Asp232, Glu234, and Glu239 each coordinate Ca(2+). Positions 256–260 are k/R-ring; that stretch reads RHRDR. An EF-hand 2 domain is found at 405–440; it reads LSDHVCDVVFALFDCDGNGELSNKEFIAIMKQRLMR. Residues Asp418, Asp420, Asn422, Glu424, and Glu429 each coordinate Ca(2+). The segment at 452–462 is C-helix region; that stretch reads RLMRAMWKCAQ.

This sequence belongs to the MICU1 family. MICU1 subfamily. In terms of assembly, heterodimer; disulfide-linked; heterodimerizes with micu2. Component of the uniplex complex.

The protein localises to the mitochondrion intermembrane space. It is found in the mitochondrion inner membrane. In terms of biological role, calcium sensor of the mitochondrial calcium uniporter (mcu) channel, which senses calcium level via its EF-hand domains. micu1 and micu2 form a disulfide-linked heterodimer that stimulates and inhibits MCU activity, depending on the concentration of calcium. At low calcium levels, micu1 occludes the pore of the MCU channel, preventing mitochondrial calcium uptake. At higher calcium levels, calcium-binding to micu1 and micu2 induces a conformational change that weakens mcu-micu1 interactions and moves the micu1-micu2 heterodimer away from the pore, allowing calcium permeation through the mcu channel. Also required to protect against manganese toxicity by preventing manganese uptake by mcu. This chain is Calcium uptake protein 1, mitochondrial (micu1), found in Xenopus tropicalis (Western clawed frog).